Consider the following 295-residue polypeptide: Protease HtpX homolog (295 aa).

The next 2 membrane-spanning stretches (helical) occupy residues 15–35 and 39–59; these read LVMA…GYAF and AQTG…VILG. A Zn(2+)-binding site is contributed by histidine 143. Glutamate 144 is an active-site residue. Histidine 147 serves as a coordination point for Zn(2+). The next 2 helical transmembrane spans lie at 159–179 and 195–215; these read ALAL…AMWW and VIML…ASMA. Glutamate 224 contributes to the Zn(2+) binding site.

This sequence belongs to the peptidase M48B family. It depends on Zn(2+) as a cofactor.

It is found in the cell membrane. The protein is Protease HtpX homolog of Ligilactobacillus salivarius (strain UCC118) (Lactobacillus salivarius).